The sequence spans 359 residues: 3-dehydroquinate synthase (359 aa).

NAD(+) is bound by residues aspartate 69–lysine 74, glycine 103–aspartate 107, threonine 127–threonine 128, lysine 140, lysine 149, and cysteine 167–threonine 170. 3 residues coordinate Zn(2+): glutamate 182, histidine 245, and histidine 262.

This sequence belongs to the sugar phosphate cyclases superfamily. Dehydroquinate synthase family. Requires Co(2+) as cofactor. The cofactor is Zn(2+). NAD(+) is required as a cofactor.

The protein resides in the cytoplasm. The enzyme catalyses 7-phospho-2-dehydro-3-deoxy-D-arabino-heptonate = 3-dehydroquinate + phosphate. Its pathway is metabolic intermediate biosynthesis; chorismate biosynthesis; chorismate from D-erythrose 4-phosphate and phosphoenolpyruvate: step 2/7. Functionally, catalyzes the conversion of 3-deoxy-D-arabino-heptulosonate 7-phosphate (DAHP) to dehydroquinate (DHQ). This Aeromonas salmonicida (strain A449) protein is 3-dehydroquinate synthase.